The following is a 59-amino-acid chain: UPF0434 protein RHOS4_00640 (59 aa).

Belongs to the UPF0434 family.

The chain is UPF0434 protein RHOS4_00640 from Cereibacter sphaeroides (strain ATCC 17023 / DSM 158 / JCM 6121 / CCUG 31486 / LMG 2827 / NBRC 12203 / NCIMB 8253 / ATH 2.4.1.) (Rhodobacter sphaeroides).